The primary structure comprises 708 residues: ATP-dependent DNA helicase Hel308 (708 aa).

The Q motif signature appears at 1–29; sequence MSIDDLKLPSNVIDIIKNRGIKKLNPPQT. ATP is bound by residues Q28 and 46-53; that span reads SPTGSGKT. The Helicase ATP-binding domain maps to 33 to 196; it reads KKGLLDGNRL…WLGAEPVATN (164 aa). Positions 145 to 148 match the DEAH box motif; it reads DELH. The 207-residue stretch at 229 to 435 folds into the Helicase C-terminal domain; the sequence is HGDDAIIAYT…ERAFYTFLLG (207 aa).

Belongs to the helicase family. Hel308 subfamily. As to quaternary structure, monomer.

It catalyses the reaction Couples ATP hydrolysis with the unwinding of duplex DNA by translocating in the 3'-5' direction.. It carries out the reaction ATP + H2O = ADP + phosphate + H(+). In terms of biological role, DNA-dependent ATPase and 3'-5' DNA helicase that may be involved in repair of stalled replication forks. This is ATP-dependent DNA helicase Hel308 from Saccharolobus solfataricus (strain ATCC 35092 / DSM 1617 / JCM 11322 / P2) (Sulfolobus solfataricus).